A 257-amino-acid polypeptide reads, in one-letter code: Meiotically up-regulated gene 14 protein (257 aa).

The protein resides in the cytoplasm. It is found in the nucleus. Its function is as follows. Has a role in meiosis. This chain is Meiotically up-regulated gene 14 protein (mug14), found in Schizosaccharomyces pombe (strain 972 / ATCC 24843) (Fission yeast).